The chain runs to 367 residues: Alanine racemase (367 aa).

Lysine 40 functions as the Proton acceptor; specific for D-alanine in the catalytic mechanism. Lysine 40 bears the N6-(pyridoxal phosphate)lysine mark. Arginine 136 contacts substrate. Tyrosine 263 acts as the Proton acceptor; specific for L-alanine in catalysis. Methionine 310 is a substrate binding site.

This sequence belongs to the alanine racemase family. The cofactor is pyridoxal 5'-phosphate.

The enzyme catalyses L-alanine = D-alanine. The protein operates within amino-acid biosynthesis; D-alanine biosynthesis; D-alanine from L-alanine: step 1/1. Functionally, catalyzes the interconversion of L-alanine and D-alanine. May also act on other amino acids. The sequence is that of Alanine racemase (alr) from Streptococcus pneumoniae serotype 19F (strain G54).